Reading from the N-terminus, the 201-residue chain is FMN-dependent NADH:quinone oxidoreductase (201 aa).

FMN is bound by residues S10, 16-18, 96-99, and 140-143; these read SQS, MYNF, and SRGG.

Belongs to the azoreductase type 1 family. Homodimer. FMN serves as cofactor.

The catalysed reaction is 2 a quinone + NADH + H(+) = 2 a 1,4-benzosemiquinone + NAD(+). It catalyses the reaction N,N-dimethyl-1,4-phenylenediamine + anthranilate + 2 NAD(+) = 2-(4-dimethylaminophenyl)diazenylbenzoate + 2 NADH + 2 H(+). Its function is as follows. Quinone reductase that provides resistance to thiol-specific stress caused by electrophilic quinones. In terms of biological role, also exhibits azoreductase activity. Catalyzes the reductive cleavage of the azo bond in aromatic azo compounds to the corresponding amines. The chain is FMN-dependent NADH:quinone oxidoreductase from Escherichia coli O6:K15:H31 (strain 536 / UPEC).